The primary structure comprises 225 residues: NAD(P)H-quinone oxidoreductase subunit K, chloroplastic (225 aa).

[4Fe-4S] cluster-binding residues include Cys-43, Cys-44, Cys-108, and Cys-139.

It belongs to the complex I 20 kDa subunit family. As to quaternary structure, NDH is composed of at least 16 different subunits, 5 of which are encoded in the nucleus. The cofactor is [4Fe-4S] cluster.

Its subcellular location is the plastid. It is found in the chloroplast thylakoid membrane. It catalyses the reaction a plastoquinone + NADH + (n+1) H(+)(in) = a plastoquinol + NAD(+) + n H(+)(out). The catalysed reaction is a plastoquinone + NADPH + (n+1) H(+)(in) = a plastoquinol + NADP(+) + n H(+)(out). NDH shuttles electrons from NAD(P)H:plastoquinone, via FMN and iron-sulfur (Fe-S) centers, to quinones in the photosynthetic chain and possibly in a chloroplast respiratory chain. The immediate electron acceptor for the enzyme in this species is believed to be plastoquinone. Couples the redox reaction to proton translocation, and thus conserves the redox energy in a proton gradient. The polypeptide is NAD(P)H-quinone oxidoreductase subunit K, chloroplastic (Nuphar advena (Common spatterdock)).